Consider the following 114-residue polypeptide: NADH-ubiquinone oxidoreductase chain 3 (114 aa).

3 consecutive transmembrane segments (helical) span residues 3–23 (LITL…INTY), 52–72 (IQFF…VLLL), and 86–106 (TILL…YEWL).

It belongs to the complex I subunit 3 family.

Its subcellular location is the mitochondrion membrane. The enzyme catalyses a ubiquinone + NADH + 5 H(+)(in) = a ubiquinol + NAD(+) + 4 H(+)(out). Its function is as follows. Core subunit of the mitochondrial membrane respiratory chain NADH dehydrogenase (Complex I) that is believed to belong to the minimal assembly required for catalysis. Complex I functions in the transfer of electrons from NADH to the respiratory chain. The immediate electron acceptor for the enzyme is believed to be ubiquinone. This Lycodon semicarinatus (Ryukyu odd-tooth snake) protein is NADH-ubiquinone oxidoreductase chain 3 (MT-ND3).